A 495-amino-acid polypeptide reads, in one-letter code: MTFPGDTAVLVLAAGPGTRMRSDTPKVLHTLAGRSMLSHVLHAIAKLAPQRLIVVLGHDHQRIAPLVGELADTLGRTIDVALQDRPLGTGHAVLCGLSALPDDYAGNVVVTSGDTPLLDADTLADLIATHRAVSAAVTVLTTTLDDPFGYGRILRTQDHGVMAIVEQTDATPSQREIREVNAGVYAFDIAALRSALSRLSSNNAQQELYLTDVIAILRSDGQTVHASHVDDSALVAGVNNRVQLAQLASELNRRVVAAHQLAGVTVVDPATTWIDVDVTIGRDTVIHPGTQLLGRTQIGGRCVVGPDTTLTDVAVGDGASVVRTHGSSSSIGDGAAVGPFTYLRPGTALGADGKLGAFVEVKNSTIGTGTKVPHLTYVGDADIGEYSNIGASSVFVNYDGTSKRRTTVGSHVRTGSDTMFVAPVTIGDGAYTGAGTVVREDVPPGALAVSAGPQRNIENWVQRKRPGSPAAQASKRASEMACQQPTQPPDADQTP.

The interval 1–241 (MTFPGDTAVL…SALVAGVNNR (241 aa)) is pyrophosphorylase. UDP-N-acetyl-alpha-D-glucosamine-binding positions include 12–15 (LAAG), Lys-26, Gln-83, 88–89 (GT), 112–114 (SGD), Gly-151, Glu-166, Asn-181, and Asn-239. Asp-114 contributes to the Mg(2+) binding site. Asn-239 contributes to the Mg(2+) binding site. The linker stretch occupies residues 242 to 262 (VQLAQLASELNRRVVAAHQLA). Residues 263–495 (GVTVVDPATT…TQPPDADQTP (233 aa)) are N-acetyltransferase. Positions 344 and 362 each coordinate UDP-N-acetyl-alpha-D-glucosamine. His-374 acts as the Proton acceptor in catalysis. The UDP-N-acetyl-alpha-D-glucosamine site is built by Tyr-377 and Asn-388. Residues Ala-391, 397–398 (NY), Ser-416, and Ala-434 each bind acetyl-CoA. The tract at residues 457-495 (IENWVQRKRPGSPAAQASKRASEMACQQPTQPPDADQTP) is disordered. Residues 483 to 495 (QQPTQPPDADQTP) show a composition bias toward low complexity.

This sequence in the N-terminal section; belongs to the N-acetylglucosamine-1-phosphate uridyltransferase family. In the C-terminal section; belongs to the transferase hexapeptide repeat family. As to quaternary structure, homotrimer. It depends on Mg(2+) as a cofactor.

It is found in the cytoplasm. The enzyme catalyses alpha-D-glucosamine 1-phosphate + acetyl-CoA = N-acetyl-alpha-D-glucosamine 1-phosphate + CoA + H(+). It catalyses the reaction N-acetyl-alpha-D-glucosamine 1-phosphate + UTP + H(+) = UDP-N-acetyl-alpha-D-glucosamine + diphosphate. The protein operates within nucleotide-sugar biosynthesis; UDP-N-acetyl-alpha-D-glucosamine biosynthesis; N-acetyl-alpha-D-glucosamine 1-phosphate from alpha-D-glucosamine 6-phosphate (route II): step 2/2. It functions in the pathway nucleotide-sugar biosynthesis; UDP-N-acetyl-alpha-D-glucosamine biosynthesis; UDP-N-acetyl-alpha-D-glucosamine from N-acetyl-alpha-D-glucosamine 1-phosphate: step 1/1. Its pathway is bacterial outer membrane biogenesis; LPS lipid A biosynthesis. In terms of biological role, catalyzes the last two sequential reactions in the de novo biosynthetic pathway for UDP-N-acetylglucosamine (UDP-GlcNAc). The C-terminal domain catalyzes the transfer of acetyl group from acetyl coenzyme A to glucosamine-1-phosphate (GlcN-1-P) to produce N-acetylglucosamine-1-phosphate (GlcNAc-1-P), which is converted into UDP-GlcNAc by the transfer of uridine 5-monophosphate (from uridine 5-triphosphate), a reaction catalyzed by the N-terminal domain. This is Bifunctional protein GlmU from Mycobacterium bovis (strain ATCC BAA-935 / AF2122/97).